A 133-amino-acid polypeptide reads, in one-letter code: Methylglyoxal synthase (133 aa).

The region spanning 1–133 (MPPKPRIALI…ARENGAAQAG (133 aa)) is the MGS-like domain. Substrate is bound by residues H12, K16, 38–41 (TGTT), and 58–59 (SG). The active-site Proton donor/acceptor is D64. Substrate is bound at residue H91.

The protein belongs to the methylglyoxal synthase family.

It catalyses the reaction dihydroxyacetone phosphate = methylglyoxal + phosphate. Functionally, catalyzes the formation of methylglyoxal from dihydroxyacetone phosphate. In Cupriavidus taiwanensis (strain DSM 17343 / BCRC 17206 / CCUG 44338 / CIP 107171 / LMG 19424 / R1) (Ralstonia taiwanensis (strain LMG 19424)), this protein is Methylglyoxal synthase.